Here is a 213-residue protein sequence, read N- to C-terminus: uncharacterized protein (213 aa).

A helical membrane pass occupies residues 22–42 (WFGLSMVSIAVIFGPLTGAHV). The short motif at 43-45 (NPA) is the NPA 1 element. Helical transmembrane passes span 63–83 (VYII…WLLF), 112–132 (NLLS…TLNH), and 138–158 (GVAM…FGGL). Positions 164-166 (NPA) match the NPA 2 motif. Residues 188–208 (FDYAWVPVLRPVIGAILAAWL) form a helical membrane-spanning segment.

It belongs to the MIP/aquaporin (TC 1.A.8) family.

The protein localises to the cell membrane. This is an uncharacterized protein from Haemophilus influenzae (strain ATCC 51907 / DSM 11121 / KW20 / Rd).